Reading from the N-terminus, the 323-residue chain is Aspartate carbamoyltransferase catalytic subunit (323 aa).

The carbamoyl phosphate site is built by Arg71 and Thr72. L-aspartate is bound at residue Lys99. Positions 121, 151, and 154 each coordinate carbamoyl phosphate. Arg184 and Arg239 together coordinate L-aspartate. Positions 280 and 281 each coordinate carbamoyl phosphate.

The protein belongs to the aspartate/ornithine carbamoyltransferase superfamily. ATCase family. In terms of assembly, heterododecamer (2C3:3R2) of six catalytic PyrB chains organized as two trimers (C3), and six regulatory PyrI chains organized as three dimers (R2).

The catalysed reaction is carbamoyl phosphate + L-aspartate = N-carbamoyl-L-aspartate + phosphate + H(+). Its pathway is pyrimidine metabolism; UMP biosynthesis via de novo pathway; (S)-dihydroorotate from bicarbonate: step 2/3. In terms of biological role, catalyzes the condensation of carbamoyl phosphate and aspartate to form carbamoyl aspartate and inorganic phosphate, the committed step in the de novo pyrimidine nucleotide biosynthesis pathway. This Cupriavidus pinatubonensis (strain JMP 134 / LMG 1197) (Cupriavidus necator (strain JMP 134)) protein is Aspartate carbamoyltransferase catalytic subunit.